A 70-amino-acid chain; its full sequence is Large ribosomal subunit protein eL38 (70 aa).

Belongs to the eukaryotic ribosomal protein eL38 family.

The chain is Large ribosomal subunit protein eL38 (RpL38) from Bombyx mori (Silk moth).